We begin with the raw amino-acid sequence, 1407 residues long: DNA-directed RNA polymerase subunit beta' (1407 aa).

Residues Cys-70, Cys-72, Cys-85, and Cys-88 each coordinate Zn(2+). Positions 460, 462, and 464 each coordinate Mg(2+). Residues Cys-814, Cys-888, Cys-895, and Cys-898 each coordinate Zn(2+). At Lys-972 the chain carries N6-acetyllysine.

It belongs to the RNA polymerase beta' chain family. In terms of assembly, the RNAP catalytic core consists of 2 alpha, 1 beta, 1 beta' and 1 omega subunit. When a sigma factor is associated with the core the holoenzyme is formed, which can initiate transcription. Mg(2+) is required as a cofactor. The cofactor is Zn(2+).

It catalyses the reaction RNA(n) + a ribonucleoside 5'-triphosphate = RNA(n+1) + diphosphate. In terms of biological role, DNA-dependent RNA polymerase catalyzes the transcription of DNA into RNA using the four ribonucleoside triphosphates as substrates. The chain is DNA-directed RNA polymerase subunit beta' from Escherichia coli O6:H1 (strain CFT073 / ATCC 700928 / UPEC).